The chain runs to 1118 residues: Pleckstrin homology domain-containing family A member 7 (1118 aa).

2 WW domains span residues 8 to 41 and 53 to 86; these read DTLP…HPRT and SDLP…HPVT. Over residues 100 to 113 the composition is skewed to basic and acidic residues; the sequence is EEPHPHMSKPERNQ. The interval 100–145 is disordered; the sequence is EEPHPHMSKPERNQRPSSMVSETSTAGTTSTLEAKPGPKIVKSSSK. Residues 114–131 are compositionally biased toward polar residues; it reads RPSSMVSETSTAGTTSTL. Residues 163–281 form the PH domain; that stretch reads PVVVRGWLHK…WVRAMNQAAQ (119 aa). Basic and acidic residues-rich tracts occupy residues 334-355 and 434-443; these read FNRR…EGRR and HWTKAQKGDG. 2 disordered regions span residues 334–512 and 528–629; these read FNRR…RRAH and QFRH…RRSM. Over residues 452 to 481 the composition is skewed to polar residues; the sequence is LPRQGPSQPLSFPENYQSLPKSTRHLSGSS. Positions 494–512 are enriched in basic and acidic residues; it reads YAQDRASHLKMSSEERRAH. Phosphoserine is present on residues S533, S542, S566, S601, S605, and S609. The interval 535 to 693 is interaction with CTNND1; sequence TAPIGAGSPE…AESDIDVKLS (159 aa). Residues 564–579 show a composition bias toward pro residues; sequence PPSPSDIPPPGPPRPF. The span at 586 to 602 shows a compositional bias: basic and acidic residues; that stretch reads TPAERVTVKPPEQRRSV. Positions 697–798 form a coiled coil; sequence EQDRILQDLE…LQEQHRRAFF (102 aa). Disordered stretches follow at residues 839–873 and 886–968; these read KTVP…VRTP and VPYR…EQGQ. A phosphoserine mark is found at S857 and S864. Position 867 is a phosphothreonine (T867). Phosphoserine occurs at positions 868, 900, and 904. Residues 930 to 939 are compositionally biased toward pro residues; it reads DQPPAVPPLP. Positions 955 to 966 are enriched in basic and acidic residues; sequence RQSDERKRDREQ. S983 and L990 each carry phosphoserine. A disordered region spans residues 1003–1024; that stretch reads GSESRYQTLPGRGLSGSTSRLQ. A coiled-coil region spans residues 1064 to 1091; the sequence is QRGKMSAEEQLERMKRHQKALVRERKRT.

As to quaternary structure, interacts with CAMSAP3 and CTNND1. Interacts (via WW domains) with TSPAN33 (via cytoplasmic domain) and with PDZD11; the interaction with TSPAN33 is dependent on PDZD11 being bound to PLEKHA7 and facilitates the docking of ADAM10 to zonula adherens through interaction of TSPAN33 with ADAM10. Expressed in kidney and lung (at protein level).

It localises to the cell junction. The protein localises to the adherens junction. The protein resides in the cytoplasm. It is found in the cytoskeleton. Its subcellular location is the microtubule organizing center. It localises to the centrosome. Functionally, required for zonula adherens biogenesis and maintenance. Acts via its interaction with CAMSAP3, which anchors microtubules at their minus-ends to zonula adherens, leading to the recruitment of KIFC3 kinesin to the junctional site. Mediates docking of ADAM10 to zonula adherens through a PDZD11-dependent interaction with the ADAM10-binding protein TSPAN33. The sequence is that of Pleckstrin homology domain-containing family A member 7 (Plekha7) from Mus musculus (Mouse).